The sequence spans 396 residues: Polygalacturonase (396 aa).

The N-terminal stretch at 1–22 (MDLKFKVHFALVLLFLAHFGES) is a signal peptide. N-linked (GlcNAc...) asparagine glycans are attached at residues asparagine 143, asparagine 151, asparagine 174, asparagine 181, asparagine 203, and asparagine 208. PbH1 repeat units follow at residues 172–198 (CKNL…HVSR) and 199–220 (SSSV…SVGD). The Proton donor role is filled by aspartate 213. The cysteines at positions 215 and 232 are disulfide-linked. Histidine 236 is a catalytic residue. PbH1 repeat units follow at residues 252–273 (VVGV…RIKT), 282–303 (VNDV…VIDQ), and 316–356 (PSQV…EVGD). N-linked (GlcNAc...) asparagine glycans are attached at residues asparagine 259 and asparagine 294. The tract at residues 364 to 396 (KEGPAKSSCENIKPSLKGKQNPPVCTASAASSS) is disordered. A disulfide bridge connects residues cysteine 372 and cysteine 388.

Belongs to the glycosyl hydrolase 28 family. As to expression, pollen.

The protein resides in the secreted. The protein localises to the cell wall. The catalysed reaction is (1,4-alpha-D-galacturonosyl)n+m + H2O = (1,4-alpha-D-galacturonosyl)n + (1,4-alpha-D-galacturonosyl)m.. Functionally, may function in depolymerizing pectin during pollen development, germination, and tube growth. This is Polygalacturonase (PG1) from Nicotiana tabacum (Common tobacco).